The following is an 893-amino-acid chain: Dolichyl-phosphate-mannose--protein mannosyltransferase 1 (893 aa).

The next 7 helical transmembrane spans lie at 29–49, 77–97, 124–144, 147–167, 170–190, 224–244, and 258–278; these read FSFLDYVVVIFLTVVAFCVRA, LLMDVYPPLGKLLFSLVAALT, LFTCLLGSLLVPLMYGTVYFP, SKTAASLAALFVIFDNGLITM, YIMIEIPALYFMSLTAFYWSV, AMFTFGWLLILAAFHLWNLLG, and FSYIFYLIGVPITVYLAVFAV. The region spanning 310–364 is the MIR 1 domain; sequence FADVAYGSLVTIRNAIPEHGYLHSSELLYPEGTEQQIISLVDEPNQNALWIIEHE. N-linked (GlcNAc...) asparagine glycosylation occurs at Asn-370. 2 consecutive MIR domains span residues 374–433 and 443–499; these read IELL…IQIL and NGTV…IESN. An N-linked (GlcNAc...) asparagine glycan is attached at Asn-443. A Phosphothreonine modification is found at Thr-451. 3 consecutive transmembrane segments (helical) span residues 573 to 593, 610 to 630, and 643 to 663; these read FVWYSVISLVAFFVIVQIFCL, YNYNIGKFVVAWLLHWAPYIL, and ALYFGIAALGVSWSFLGNAVF. The N-linked (GlcNAc...) asparagine glycan is linked to Asn-665. Residues 671–691 form a helical membrane-spanning segment; the sequence is ALSVIIMALMFLVYRLYSPFT. Residue Asn-720 is glycosylated (N-linked (GlcNAc...) asparagine). Residues 785–893 form a disordered region; it reads KAEQEAREAA…VAESAQARVE (109 aa). Residues 786–806 show a composition bias toward basic and acidic residues; that stretch reads AEQEAREAAEKAASEAAERSS. 2 stretches are compositionally biased toward low complexity: residues 807 to 823 and 854 to 864; these read SEAAASSSSESVAAASV and MEAAALNNAAE. Residues 868–878 are compositionally biased toward polar residues; sequence VVGSSPESVAS.

The protein belongs to the glycosyltransferase 39 family.

The protein resides in the endoplasmic reticulum membrane. The protein localises to the nucleus membrane. It catalyses the reaction a di-trans,poly-cis-dolichyl beta-D-mannosyl phosphate + L-seryl-[protein] = 3-O-(alpha-D-mannosyl)-L-seryl-[protein] + a di-trans,poly-cis-dolichyl phosphate + H(+). The catalysed reaction is a di-trans,poly-cis-dolichyl beta-D-mannosyl phosphate + L-threonyl-[protein] = 3-O-(alpha-D-mannosyl)-L-threonyl-[protein] + a di-trans,poly-cis-dolichyl phosphate + H(+). It participates in protein modification; protein glycosylation. Transfers mannose from Dol-P-mannose to Ser or Thr residues on proteins. Required for normal cell growth and septum formation. Shown to actively O-mannosylate wsc1. This Schizosaccharomyces pombe (strain 972 / ATCC 24843) (Fission yeast) protein is Dolichyl-phosphate-mannose--protein mannosyltransferase 1 (ogm1).